A 105-amino-acid chain; its full sequence is Heat shock protein HspQ (105 aa).

It belongs to the HspQ family.

It is found in the cytoplasm. In terms of biological role, involved in the degradation of certain denaturated proteins, including DnaA, during heat shock stress. The chain is Heat shock protein HspQ from Sodalis glossinidius (strain morsitans).